A 274-amino-acid polypeptide reads, in one-letter code: RsbT co-antagonist protein RsbRA (274 aa).

An STAS domain is found at 150–265 (SAPLIPVFEN…KGIQTALEMT (116 aa)). Threonine 171 and threonine 205 each carry phosphothreonine.

In terms of assembly, interacts with RsbRB and RsbS in the stressosome. The stressosome probably also contains RsbRC and RsbRD. In terms of processing, phosphorylated by RsbT. This threonine phosphorylation abrogates the ability of RsbRA to stimulate RsbT in vitro.

Functionally, acts as a positive regulator of sigma-B activity in response to salt and heat stress by stimulating the activity of the RsbT kinase toward RsbS in vitro. In terms of biological role, one of 4 functionally non-identical RsbR paralogs, it functions in the environmental signaling branch of the general stress response. Its function is as follows. Negative regulator of sigma-B activity. Non-phosphorylated RsbS binds to RsbT, preventing its association with RsbU. Requires any one of RsbRA, RsbRB, RsbRC or RsbRD to sequester RsbT. When RsbS and the RsbR paralog(s) are phosphorylated, they release RsbT, which can then bind and activate RsbU. In Bacillus subtilis (strain 168), this protein is RsbT co-antagonist protein RsbRA (rsbRA).